Reading from the N-terminus, the 440-residue chain is Protein CapE (440 aa).

12 helical membrane passes run 7–27 (VILIINFVTVLFSIFTFIGYL), 31–51 (IGFRVVTISLCITIAMTVYLL), 60–80 (LVYLIYLFLTNFGVFVTNIFL), 102–122 (FSIATFAILTFTILSNFISVF), 141–161 (FYYTGILFIIGFTIQFLFYII), 179–199 (ELPMYTYGIFFFSIGIAFAFS), 204–224 (THIKYLVIILTPQVLFFLITG), 249–269 (WWMIITIVFTLFFVIPFIKVF), 324–344 (IFSYIIPGLQPVNYEMVGYGF), 360–380 (YYNGAIVGVLIVMVLLVLLLW), 382–402 (FTNFKSFEMLSMGTAIVSVLI), and 409–429 (FSFVPAYILIIIVIVIILLFI).

It localises to the cell membrane. It functions in the pathway capsule biogenesis; capsule polysaccharide biosynthesis. Functionally, required for the biosynthesis of type 1 capsular polysaccharide. This chain is Protein CapE (capE), found in Staphylococcus aureus.